The chain runs to 89 residues: UPF0223 protein BCG9842_B1176 (89 aa).

Belongs to the UPF0223 family.

This Bacillus cereus (strain G9842) protein is UPF0223 protein BCG9842_B1176.